Here is a 151-residue protein sequence, read N- to C-terminus: S-ribosylhomocysteine lyase (151 aa).

Fe cation-binding residues include His54, His58, and Cys121.

The protein belongs to the LuxS family. As to quaternary structure, homodimer. Fe cation serves as cofactor.

It carries out the reaction S-(5-deoxy-D-ribos-5-yl)-L-homocysteine = (S)-4,5-dihydroxypentane-2,3-dione + L-homocysteine. Involved in the synthesis of autoinducer 2 (AI-2) which is secreted by bacteria and is used to communicate both the cell density and the metabolic potential of the environment. The regulation of gene expression in response to changes in cell density is called quorum sensing. Catalyzes the transformation of S-ribosylhomocysteine (RHC) to homocysteine (HC) and 4,5-dihydroxy-2,3-pentadione (DPD). This is S-ribosylhomocysteine lyase from Clostridium perfringens (strain ATCC 13124 / DSM 756 / JCM 1290 / NCIMB 6125 / NCTC 8237 / Type A).